The following is a 610-amino-acid chain: UvrABC system protein C (610 aa).

The 79-residue stretch at 16–94 (SQPGVYRMYD…IKLYQPRYNV (79 aa)) folds into the GIY-YIG domain. The region spanning 204–239 (DQVLTQLISRMETASQNLEFEEAARIRDQIQAVRRV) is the UVR domain.

Belongs to the UvrC family. Interacts with UvrB in an incision complex.

It localises to the cytoplasm. Functionally, the UvrABC repair system catalyzes the recognition and processing of DNA lesions. UvrC both incises the 5' and 3' sides of the lesion. The N-terminal half is responsible for the 3' incision and the C-terminal half is responsible for the 5' incision. The protein is UvrABC system protein C of Escherichia coli O139:H28 (strain E24377A / ETEC).